Reading from the N-terminus, the 415-residue chain is Hydroxysteroid dehydrogenase-like protein 2 (415 aa).

NADP(+) is bound by residues 17 to 23 (GASRGIG), K42, and D74. The active-site Proton acceptor is Y168. Residue K172 participates in NADP(+) binding. The SCP2 domain maps to 304–412 (AGPVSEMFNT…KLEKMMAMMK (109 aa)).

This sequence belongs to the short-chain dehydrogenases/reductases (SDR) family.

It localises to the peroxisome. It is found in the mitochondrion. Has apparently no steroid dehydrogenase activity. Might act as a metabolic regulator that affects systemic adaptation to nutritional cues. The sequence is that of Hydroxysteroid dehydrogenase-like protein 2 (hsdl2) from Danio rerio (Zebrafish).